We begin with the raw amino-acid sequence, 303 residues long: Acetylglutamate kinase (303 aa).

Substrate-binding positions include 76–77 (GG), R98, and N199.

This sequence belongs to the acetylglutamate kinase family. ArgB subfamily.

It is found in the cytoplasm. It carries out the reaction N-acetyl-L-glutamate + ATP = N-acetyl-L-glutamyl 5-phosphate + ADP. The protein operates within amino-acid biosynthesis; L-arginine biosynthesis; N(2)-acetyl-L-ornithine from L-glutamate: step 2/4. Functionally, catalyzes the ATP-dependent phosphorylation of N-acetyl-L-glutamate. The sequence is that of Acetylglutamate kinase from Clavibacter sepedonicus (Clavibacter michiganensis subsp. sepedonicus).